The following is a 92-amino-acid chain: Small ribosomal subunit protein uS19 (92 aa).

It belongs to the universal ribosomal protein uS19 family.

Functionally, protein S19 forms a complex with S13 that binds strongly to the 16S ribosomal RNA. The chain is Small ribosomal subunit protein uS19 from Francisella tularensis subsp. tularensis (strain FSC 198).